A 119-amino-acid chain; its full sequence is Beta-2-microglobulin (119 aa).

The signal sequence occupies residues 1–20 (MARFVVVALLVQLSLFGLEA). Positions 25 to 114 (PKIQVYSRYP…VTFSTPKTVK (90 aa)) constitute an Ig-like C1-type domain. Cysteines 45 and 100 form a disulfide.

Belongs to the beta-2-microglobulin family. In terms of assembly, heterodimer of an alpha chain and a beta chain. Beta-2-microglobulin is the beta-chain of major histocompatibility complex class I molecules.

The protein resides in the secreted. In terms of biological role, component of the class I major histocompatibility complex (MHC). Involved in the presentation of peptide antigens to the immune system. The polypeptide is Beta-2-microglobulin (B2M) (Saguinus imperator (Emperor tamarin)).